Here is a 143-residue protein sequence, read N- to C-terminus: Nucleoside diphosphate kinase (143 aa).

Residues Lys11, Phe59, Arg87, Thr93, Arg104, and Asn114 each contribute to the ATP site. The Pros-phosphohistidine intermediate role is filled by His117.

This sequence belongs to the NDK family. As to quaternary structure, homotetramer. The cofactor is Mg(2+).

It localises to the cytoplasm. It carries out the reaction a 2'-deoxyribonucleoside 5'-diphosphate + ATP = a 2'-deoxyribonucleoside 5'-triphosphate + ADP. The enzyme catalyses a ribonucleoside 5'-diphosphate + ATP = a ribonucleoside 5'-triphosphate + ADP. In terms of biological role, major role in the synthesis of nucleoside triphosphates other than ATP. The ATP gamma phosphate is transferred to the NDP beta phosphate via a ping-pong mechanism, using a phosphorylated active-site intermediate. The protein is Nucleoside diphosphate kinase of Enterobacter sp. (strain 638).